Here is a 432-residue protein sequence, read N- to C-terminus: MAKNVVVIGAQWGDEGKGKIVDWLAEEAGGVVRFQGGHNAGHTLVVGGKKTILRLIPSGILHESLDCFIGSGVVVSPEALLGEIDELNAAGVKNVEGRLKIAPTCPLILPYHIALDQAREASRGKGKIGTTGRGIGPAYEDKVARRAIRAADLLHPEKLREKLDAVFAYYNVQLQHLHNAESVKAEDVMAVIEKVAPRITPMITDVSRVLNEKNKNGEKLLFEGAQGALLDIDYGTYPFVTSSNCLAGAASAGAGVGPQMLDYVLGIVKAYTTRVGSGPFPTELFDEVGAGLAERGHEFGSVTGRARRCGWFDAAALKRSIQINGISGMCITKLDVMDGVETINICVGYELPDGGKTDILPCGSDAVEACKPIYETMPGWSESTFGVKSYDALPANAKAYLKRIEEVCGAPVAIVSTGPDREETIVLHHPFA.

GTP is bound by residues G13–K19 and G41–T43. The Proton acceptor role is filled by D14. Positions 14 and 41 each coordinate Mg(2+). IMP is bound by residues D14 to K17, N39 to H42, T131, R145, Q226, T241, and R305. The Proton donor role is filled by H42. S301–R307 serves as a coordination point for substrate. Residues R307, K333–D335, and S416–G418 contribute to the GTP site.

This sequence belongs to the adenylosuccinate synthetase family. As to quaternary structure, homodimer. Mg(2+) is required as a cofactor.

The protein localises to the cytoplasm. The enzyme catalyses IMP + L-aspartate + GTP = N(6)-(1,2-dicarboxyethyl)-AMP + GDP + phosphate + 2 H(+). The protein operates within purine metabolism; AMP biosynthesis via de novo pathway; AMP from IMP: step 1/2. In terms of biological role, plays an important role in the de novo pathway of purine nucleotide biosynthesis. Catalyzes the first committed step in the biosynthesis of AMP from IMP. In Neisseria meningitidis serogroup A / serotype 4A (strain DSM 15465 / Z2491), this protein is Adenylosuccinate synthetase.